The chain runs to 659 residues: Zinc finger protein 304 (659 aa).

One can recognise a KRAB domain in the interval 14 to 88 (VTFEDVFVYF…TAESGLFQKA (75 aa)). C2H2-type zinc fingers lie at residues 89–111 (HPCE…QGSH), 115–139 (KLCT…QKQH), 251–273 (FRCL…RKIH), 279–301 (HVCK…QKFH), 307–329 (YTCS…QRVH), 335–357 (YDCS…QRIH), 363–385 (YKCN…QRFH), 391–413 (YECS…WRIH), 419–441 (YECI…RRVH), 447–469 (YVCS…QIIH), 475–497 (YECS…QKIH), 503–525 (YECG…QRIH), 531–553 (YECN…QRVH), 559–581 (YVCS…KKVH), 587–609 (YECS…QRVH), and 615–637 (YVCS…QKAH).

This sequence belongs to the krueppel C2H2-type zinc-finger protein family. Probably part of a corepressor complex containing ZNF304, TRIM28, SETDB1 and DNMT1; leading to promoter hypermethylation and transcriptional silencing. Probably associates with Polycomb group (PcG) complexes; leading to trimethylation of 'Lys-27' of histone H3 (H3K27me3). Interacts with USP28. Post-translationally, deubiquitinated by USP28; the deubiquitination leads to the stabilization of ZNF304 from proteolytic degradation. As to expression, expressed in undifferentiated embryonic stem cells (ESCs). Expressed strongly in colorectal cancers cells (CRCs). Expressed strongly in ovarian carcinoma (OC) tumor cell lines compared to non-transformed ovarian epithelial cells (at protein level). Expressed in lymphoid tissues, thyroid, adrenal gland, prostate, pancreas and skeletal muscles.

The protein resides in the nucleus. In terms of biological role, acts as a transcriptional regulator and plays a role in gene silencing. Probably forms a corepressor complex required for activated KRAS-mediated promoter hypermethylation and transcriptional silencing of several tumor suppressor genes (TSGs) or other tumor-related genes in colorectal cancer (CRC) cells. Also required to maintain a transcriptionally repressive state of genes in undifferentiated embryonic stem cells (ESCs) by inducing trimethylation of 'Lys-27' of histone H3 (H3K27me3) in a Polycomb group (PcG) complexes-dependent manner. Associates at promoter regions of TSGs and mediates the recruitment of the corepressor complex containing the scaffolding protein TRIM28, methyltransferase DNMT1 and histone methyltransferase SETDB1 and/or the PcG complexes at those sites. Transcription factor involved in the metastatic cascade process by inducing cell migration and proliferation and gain resistance to anoikis of ovarian carcinoma (OC) cells via integrin-mediated signaling pathways. Associates with the ITGB1 promoter and positively regulates beta-1 integrin transcription expression. Promotes angiogenesis. Promotes tumor growth. In Homo sapiens (Human), this protein is Zinc finger protein 304.